The primary structure comprises 300 residues: HTH-type transcriptional regulator ArgP (300 aa).

Positions 4–60 (FDYKLLAALAAVVEQGGFERAAQALGLSQSAVSQRIKLLEARVGQPVLVRETPPHPT) constitute an HTH lysR-type domain. The H-T-H motif DNA-binding region spans 21 to 40 (FERAAQALGLSQSAVSQRIK).

It belongs to the LysR transcriptional regulatory family. Homodimer.

Functionally, controls the transcription of genes involved in arginine and lysine metabolism. This chain is HTH-type transcriptional regulator ArgP, found in Pseudomonas aeruginosa (strain UCBPP-PA14).